The primary structure comprises 127 residues: Fluoride-specific ion channel FluC (127 aa).

4 helical membrane passes run 1 to 21 (MMSY…RHMV), 32 to 52 (EFPF…GAVV), 71 to 91 (TGIL…VLLY), and 96 to 116 (VFLA…ALLL). Na(+) contacts are provided by glycine 75 and threonine 78.

Belongs to the fluoride channel Fluc/FEX (TC 1.A.43) family.

Its subcellular location is the cell inner membrane. The catalysed reaction is fluoride(in) = fluoride(out). Its activity is regulated as follows. Na(+) is not transported, but it plays an essential structural role and its presence is essential for fluoride channel function. Its function is as follows. Fluoride-specific ion channel. Important for reducing fluoride concentration in the cell, thus reducing its toxicity. The protein is Fluoride-specific ion channel FluC of Granulibacter bethesdensis (strain ATCC BAA-1260 / CGDNIH1).